A 312-amino-acid chain; its full sequence is Carbonic anhydrase 4 (312 aa).

Residues 1 to 18 (MRMLLALLALSAARPSAS) form the signal peptide. Residues 21 to 285 (SHWCYEVQAE…LGQRTVIKSG (265 aa)) enclose the Alpha-carbonic anhydrase domain. 2 disulfides stabilise this stretch: cysteine 24-cysteine 36 and cysteine 46-cysteine 229. Catalysis depends on histidine 88, which acts as the Proton donor/acceptor. The Zn(2+) site is built by histidine 115, histidine 117, and histidine 140. 225 to 226 (TT) lines the substrate pocket. Serine 284 is lipidated: GPI-anchor amidated serine. Residues 285-312 (GAPGRPLPWALPALLGPMLACLLAGFLR) constitute a propeptide, removed in mature form.

The protein belongs to the alpha-carbonic anhydrase family. In terms of assembly, interacts with SLC4A4. Requires Zn(2+) as cofactor. In terms of tissue distribution, expressed in the endothelium of the choriocapillaris in eyes (at protein level). Not expressed in the retinal epithelium at detectable levels.

It localises to the cell membrane. The enzyme catalyses hydrogencarbonate + H(+) = CO2 + H2O. Its activity is regulated as follows. Activated by histamine, L-adrenaline, D-phenylalanine, L- and D-histidine. Inhibited by coumarins, saccharin, sulfonamide derivatives such as acetazolamide and Foscarnet (phosphonoformate trisodium salt). Its function is as follows. Catalyzes the reversible hydration of carbon dioxide into bicarbonate and protons and thus is essential to maintaining intracellular and extracellular pH. May stimulate the sodium/bicarbonate transporter activity of SLC4A4 that acts in pH homeostasis. It is essential for acid overload removal from the retina and retina epithelium, and acid release in the choriocapillaris in the choroid. The chain is Carbonic anhydrase 4 from Homo sapiens (Human).